Reading from the N-terminus, the 210-residue chain is 3-demethoxyubiquinol 3-hydroxylase (210 aa).

The Fe cation site is built by Glu-59, Glu-89, His-92, Glu-141, Glu-173, and His-176.

It belongs to the COQ7 family. Requires Fe cation as cofactor.

Its subcellular location is the cell membrane. The enzyme catalyses a 5-methoxy-2-methyl-3-(all-trans-polyprenyl)benzene-1,4-diol + AH2 + O2 = a 3-demethylubiquinol + A + H2O. It functions in the pathway cofactor biosynthesis; ubiquinone biosynthesis. Catalyzes the hydroxylation of 2-nonaprenyl-3-methyl-6-methoxy-1,4-benzoquinol during ubiquinone biosynthesis. The polypeptide is 3-demethoxyubiquinol 3-hydroxylase (Albidiferax ferrireducens (strain ATCC BAA-621 / DSM 15236 / T118) (Rhodoferax ferrireducens)).